The sequence spans 260 residues: Adenosylcobinamide-GDP ribazoletransferase (260 aa).

7 helical membrane-spanning segments follow: residues 42–62, 68–88, 118–137, 144–166, 180–200, 201–221, and 237–257; these read TWAL…VYKI, LTPN…TGAL, IGTY…WSAL, WLVT…AFMS, AGAP…LVLT, LALG…AGLI, and ILGA…AAFQ.

This sequence belongs to the CobS family. Mg(2+) serves as cofactor.

It localises to the cell inner membrane. The enzyme catalyses alpha-ribazole + adenosylcob(III)inamide-GDP = adenosylcob(III)alamin + GMP + H(+). It catalyses the reaction alpha-ribazole 5'-phosphate + adenosylcob(III)inamide-GDP = adenosylcob(III)alamin 5'-phosphate + GMP + H(+). Its pathway is cofactor biosynthesis; adenosylcobalamin biosynthesis; adenosylcobalamin from cob(II)yrinate a,c-diamide: step 7/7. Joins adenosylcobinamide-GDP and alpha-ribazole to generate adenosylcobalamin (Ado-cobalamin). Also synthesizes adenosylcobalamin 5'-phosphate from adenosylcobinamide-GDP and alpha-ribazole 5'-phosphate. In Bradyrhizobium diazoefficiens (strain JCM 10833 / BCRC 13528 / IAM 13628 / NBRC 14792 / USDA 110), this protein is Adenosylcobinamide-GDP ribazoletransferase.